Reading from the N-terminus, the 37-residue chain is uncharacterized protein (37 aa).

A helical transmembrane segment spans residues 13–33; the sequence is TFLTIIVLLMIVFGIAIVALL.

It localises to the host membrane. This is an uncharacterized protein from Acidianus convivator (ABV).